We begin with the raw amino-acid sequence, 360 residues long: 3-dehydroquinate synthase (360 aa).

Residues 71–76 (DGEQYK), 105–109 (GVIGD), 129–130 (TT), Lys142, Lys151, and 169–172 (CLDT) contribute to the NAD(+) site. Residues Glu184, His247, and His264 each coordinate Zn(2+).

Belongs to the sugar phosphate cyclases superfamily. Dehydroquinate synthase family. The cofactor is Co(2+). It depends on Zn(2+) as a cofactor. Requires NAD(+) as cofactor.

The protein localises to the cytoplasm. The enzyme catalyses 7-phospho-2-dehydro-3-deoxy-D-arabino-heptonate = 3-dehydroquinate + phosphate. Its pathway is metabolic intermediate biosynthesis; chorismate biosynthesis; chorismate from D-erythrose 4-phosphate and phosphoenolpyruvate: step 2/7. Its function is as follows. Catalyzes the conversion of 3-deoxy-D-arabino-heptulosonate 7-phosphate (DAHP) to dehydroquinate (DHQ). The polypeptide is 3-dehydroquinate synthase (Erwinia tasmaniensis (strain DSM 17950 / CFBP 7177 / CIP 109463 / NCPPB 4357 / Et1/99)).